Reading from the N-terminus, the 366-residue chain is Histidinol-phosphate aminotransferase 1 (366 aa).

Lys-226 bears the N6-(pyridoxal phosphate)lysine mark.

Belongs to the class-II pyridoxal-phosphate-dependent aminotransferase family. Histidinol-phosphate aminotransferase subfamily. In terms of assembly, homodimer. Requires pyridoxal 5'-phosphate as cofactor.

The catalysed reaction is L-histidinol phosphate + 2-oxoglutarate = 3-(imidazol-4-yl)-2-oxopropyl phosphate + L-glutamate. It participates in amino-acid biosynthesis; L-histidine biosynthesis; L-histidine from 5-phospho-alpha-D-ribose 1-diphosphate: step 7/9. This is Histidinol-phosphate aminotransferase 1 from Mannheimia succiniciproducens (strain KCTC 0769BP / MBEL55E).